The chain runs to 137 residues: Putative pre-16S rRNA nuclease (137 aa).

This sequence belongs to the YqgF nuclease family.

It localises to the cytoplasm. Could be a nuclease involved in processing of the 5'-end of pre-16S rRNA. The chain is Putative pre-16S rRNA nuclease from Bacillus cereus (strain B4264).